The chain runs to 133 residues: FK506-binding protein 2 (133 aa).

A signal peptide spans 1–20; it reads MKLLYCLLLVILALVGLSSG. Residues 45–133 enclose the PPIase FKBP-type domain; that stretch reads GDKLKIHYTG…IFDVELIGIN (89 aa).

It belongs to the FKBP-type PPIase family.

It carries out the reaction [protein]-peptidylproline (omega=180) = [protein]-peptidylproline (omega=0). Inhibited by both FK506 and rapamycin. In terms of biological role, PPIases accelerate the folding of proteins by catalyzing the cis-trans isomerization of proline imidic peptide bonds in oligopeptides. In Dictyostelium discoideum (Social amoeba), this protein is FK506-binding protein 2 (fkbp2).